A 159-amino-acid chain; its full sequence is 2-C-methyl-D-erythritol 2,4-cyclodiphosphate synthase (159 aa).

A divalent metal cation-binding residues include D10 and H12. 4-CDP-2-C-methyl-D-erythritol 2-phosphate is bound by residues 10 to 12 (DVH) and 37 to 38 (HS). H45 contacts a divalent metal cation. Residues 59–61 (DIG), 64–68 (FPDTD), 103–109 (AQAPKML), 135–138 (TTTE), F142, and R145 each bind 4-CDP-2-C-methyl-D-erythritol 2-phosphate.

It belongs to the IspF family. As to quaternary structure, homotrimer. The cofactor is a divalent metal cation.

The catalysed reaction is 4-CDP-2-C-methyl-D-erythritol 2-phosphate = 2-C-methyl-D-erythritol 2,4-cyclic diphosphate + CMP. It participates in isoprenoid biosynthesis; isopentenyl diphosphate biosynthesis via DXP pathway; isopentenyl diphosphate from 1-deoxy-D-xylulose 5-phosphate: step 4/6. Involved in the biosynthesis of isopentenyl diphosphate (IPP) and dimethylallyl diphosphate (DMAPP), two major building blocks of isoprenoid compounds. Catalyzes the conversion of 4-diphosphocytidyl-2-C-methyl-D-erythritol 2-phosphate (CDP-ME2P) to 2-C-methyl-D-erythritol 2,4-cyclodiphosphate (ME-CPP) with a corresponding release of cytidine 5-monophosphate (CMP). The polypeptide is 2-C-methyl-D-erythritol 2,4-cyclodiphosphate synthase (Francisella philomiragia subsp. philomiragia (strain ATCC 25017 / CCUG 19701 / FSC 153 / O#319-036)).